A 498-amino-acid chain; its full sequence is ATP synthase subunit beta, chloroplastic (498 aa).

172–179 is an ATP binding site; sequence GGAGVGKT.

It belongs to the ATPase alpha/beta chains family. As to quaternary structure, F-type ATPases have 2 components, CF(1) - the catalytic core - and CF(0) - the membrane proton channel. CF(1) has five subunits: alpha(3), beta(3), gamma(1), delta(1), epsilon(1). CF(0) has four main subunits: a(1), b(1), b'(1) and c(9-12).

The protein localises to the plastid. It localises to the chloroplast thylakoid membrane. The catalysed reaction is ATP + H2O + 4 H(+)(in) = ADP + phosphate + 5 H(+)(out). Produces ATP from ADP in the presence of a proton gradient across the membrane. The catalytic sites are hosted primarily by the beta subunits. The protein is ATP synthase subunit beta, chloroplastic of Atropa belladonna (Belladonna).